A 111-amino-acid chain; its full sequence is Large ribosomal subunit protein P2 (111 aa).

Residues Ala63 to Ala84 show a composition bias toward low complexity. The interval Ala63 to Asp111 is disordered. A compositionally biased stretch (basic and acidic residues) spans Glu85–Glu97. Ser98 is subject to Phosphoserine.

In terms of assembly, part of the ribosomal stalk of the large ribosomal subunit; P1 and P2 exist as dimers which assemble on the P0 scaffold.

Its function is as follows. Plays an important role in the elongation step of protein synthesis. The chain is Large ribosomal subunit protein P2 from Artemia salina (Brine shrimp).